Here is a 247-residue protein sequence, read N- to C-terminus: UPF0309 protein Lm4b_02611 (247 aa).

Residues Val-31–Pro-214 enclose the SIS domain.

Belongs to the UPF0309 family.

The chain is UPF0309 protein Lm4b_02611 from Listeria monocytogenes serotype 4b (strain CLIP80459).